A 96-amino-acid polypeptide reads, in one-letter code: Beta-defensin 20 (96 aa).

The signal sequence occupies residues 1-21; the sequence is MKLPQLLLILLFVVLADSVQP. 3 cysteine pairs are disulfide-bonded: Cys24–Cys52, Cys32–Cys46, and Cys36–Cys53.

Belongs to the beta-defensin family.

The protein localises to the secreted. In terms of biological role, has antibacterial activity. The polypeptide is Beta-defensin 20 (Defb20) (Rattus norvegicus (Rat)).